We begin with the raw amino-acid sequence, 687 residues long: Chloride channel protein ClC-Kb (687 aa).

Residues 1–50 (MEELVGLREGASKKPVPLQELWGPCPRIRRNIQGGLEWLKERLFRVGEDW) lie on the Cytoplasmic side of the membrane. Helical transmembrane passes span 51–82 (YFLV…KWLY) and 91–111 (LRYL…SGFS). The helical intramembrane region spans 116–127 (PSSGGSGIPEVK). Residue Ser121 participates in chloride binding. 2 helical membrane-spanning segments follow: residues 141 to 160 (IKNF…TGST) and 161 to 180 (IFLG…AAYL). An intramembrane region (helical) is located at residues 203 to 224 (AGAAVGVATVFAAPISGVLFSI). The chain crosses the membrane as a helical span at residues 236 to 255 (YWRGFFAATCGAFMFHLLAV). Ca(2+) is bound by residues Glu259, Glu261, Asp278, and Glu281. 2 helical membrane passes run 282 to 310 (IFFF…LFFL) and 325 to 342 (PLYS…TYPP). The helical intramembrane region spans 349-360 (ASRLSMSEHLET). 2 helical membrane passes run 400–420 (GTLV…TTIP) and 421–440 (IPAG…GRLF). Phe426 contributes to the chloride binding site. Positions 464-496 (GAYALAGAAAFSGAVTHTLSTALLAFEVTGQLV) form an intramembrane region, helical. A helical transmembrane segment spans residues 500 to 520 (PVLMAVLAANAISQSFQPSFY). The Cytoplasmic segment spans residues 521-687 (DGTIIVKKLP…STLTNPPAPK (167 aa)). CBS domains follow at residues 551–609 (MNCA…EPAS) and 626–687 (CPTQ…PAPK).

Belongs to the chloride channel (TC 2.A.49) family. CLCNKB subfamily. As to quaternary structure, homodimer. Interacts with BSND. N-glycosylated. Specifically expressed in the kidney, predominantly in the outer medulla and cortex. All nephron segments expressing BSND also express CLCNK proteins.

Its subcellular location is the basolateral cell membrane. It carries out the reaction chloride(in) = chloride(out). The catalysed reaction is iodide(out) = iodide(in). It catalyses the reaction nitrate(in) = nitrate(out). The enzyme catalyses bromide(in) = bromide(out). In terms of biological role, anion-selective channel permeable to small monovalent anions with ion selectivity for chloride &gt; bromide &gt; nitrate &gt; iodide. Forms a homodimeric channel where each subunit has its own ion conduction pathway. May conduct double-barreled currents controlled by two types of gates, two fast gates that control each subunit independently and a slow common gate that opens and shuts off both subunits simultaneously. Assembles with the regulatory subunit BSND/Barttin for sorting at the basolateral plasma membrane domain and functional switch to the ion conducting state. CLCNKB:BSND channels display mostly a linear current-voltage relationship controlled by common gate. Mediates chloride conductance along nephron segments, namely the thick ascending limb of Henle's loop, convoluted tubule and the collecting duct, contributing to the maintenance of systemic acid-base and electrolyte homeostasis. Conducts chloride currents in the stria vascularis of the inner ear to establish the endocochlear potential necessary for normal hearing. This is Chloride channel protein ClC-Kb from Mus musculus (Mouse).